A 98-amino-acid polypeptide reads, in one-letter code: NADH-ubiquinone oxidoreductase chain 4L (98 aa).

Transmembrane regions (helical) follow at residues 1-21 (MSMVYANIFLAFIMSLMGLLM), 29-49 (SLLCLEGMMLSLFVMMTVTIL), and 61-81 (IILLVFAACEAALGLLLLVMV).

It belongs to the complex I subunit 4L family. As to quaternary structure, core subunit of respiratory chain NADH dehydrogenase (Complex I) which is composed of 45 different subunits.

Its subcellular location is the mitochondrion inner membrane. It carries out the reaction a ubiquinone + NADH + 5 H(+)(in) = a ubiquinol + NAD(+) + 4 H(+)(out). Core subunit of the mitochondrial membrane respiratory chain NADH dehydrogenase (Complex I) which catalyzes electron transfer from NADH through the respiratory chain, using ubiquinone as an electron acceptor. Part of the enzyme membrane arm which is embedded in the lipid bilayer and involved in proton translocation. The polypeptide is NADH-ubiquinone oxidoreductase chain 4L (MT-ND4L) (Pusa hispida (Ringed seal)).